The primary structure comprises 422 residues: Signal recognition particle receptor FtsY (422 aa).

Residues 39–86 form a disordered region; the sequence is PERGVVDRSGGYTASSGITFSQTPTTQPAERIDTSGLPAVGDDATVPR. Polar residues predominate over residues 50-66; sequence YTASSGITFSQTPTTQP. Residues 230 to 237, 312 to 316, and 374 to 377 contribute to the GTP site; these read GVNGTGKT, DTAGR, and TKLD.

This sequence belongs to the GTP-binding SRP family. FtsY subfamily. As to quaternary structure, part of the signal recognition particle protein translocation system, which is composed of SRP and FtsY.

It is found in the cell membrane. The protein resides in the cytoplasm. The enzyme catalyses GTP + H2O = GDP + phosphate + H(+). Its function is as follows. Involved in targeting and insertion of nascent membrane proteins into the cytoplasmic membrane. Acts as a receptor for the complex formed by the signal recognition particle (SRP) and the ribosome-nascent chain (RNC). This is Signal recognition particle receptor FtsY from Mycobacterium bovis (strain ATCC BAA-935 / AF2122/97).